The following is a 556-amino-acid chain: MARNVLESSLLGAGFSIIFQILCRILTFGINAYIVRHVGREVLGIMNVRLLLLESTLLFLSREAINRAALSANAQQGDRCSWAQLINQMWLTVPICAVLCAPCLYIWLNWLSAVDAIYASQYEFACYAVAFSCVLELMAESAVFVAQVFCFVKLKILLNTLHILVRSAIFLWIVTGDRSAAINAFAIAQLSSAVTIVLGQYGFFYFYLKGFKDFVTQQAKKKPVAPKAWQVSLYEHMDDFPFKQLSDFLPGVMFNPNGKHFNRELQTLTLSFVKQGVLKQILTEGEKYVMSVSPVLSFGEQATYDVVNNLGSMAARFIFRPIEDSSYFYFTQTLSRDIKLAKQPQERVRQASSVLNNLLLGVSSIGLIAFTFGQSYSYPVLLLYGGPDFVAGGLPQSLLQWHCLAIYLLAVNGISEGYMFATNTSRDIDKYNYLMAIFSVSFLVLSYILTGIFGPVGFIFANCINMLSRILYSTYYIRHQYRPLSLDPLLGLWPGKLFGCTLFLAGIVCYWYQSSDLATHLGVGVLAGLACLLSWALAHRDLVRLAWRYGRRIKIE.

The next 12 helical transmembrane spans lie at 10-30, 41-61, 91-111, 129-149, 156-176, 184-204, 353-373, 389-409, 440-460, 461-477, 489-509, and 517-537; these read LLGAGFSIIFQILCRILTFGI, EVLGIMNVRLLLLESTLLFLS, LTVPICAVLCAPCLYIWLNWL, VAFSCVLELMAESAVFVAQVF, ILLNTLHILVRSAIFLWIVTG, AFAIAQLSSAVTIVLGQYGFF, SVLNNLLLGVSSIGLIAFTFG, FVAGGLPQSLLQWHCLAIYLL, VSFLVLSYILTGIFGPVGFIF, ANCINMLSRILYSTYYI, LLGLWPGKLFGCTLFLAGIVC, and LATHLGVGVLAGLACLLSWAL.

It belongs to the RFT1 family.

The protein resides in the endoplasmic reticulum membrane. It participates in protein modification; protein glycosylation. Its function is as follows. Intramembrane glycolipid transporter that operates in the biosynthetic pathway of dolichol-linked oligosaccharides, the glycan precursors employed in protein asparagine (N)-glycosylation. The sequential addition of sugars to dolichol pyrophosphate produces dolichol-linked oligosaccharides containing fourteen sugars, including two GlcNAcs, nine mannoses and three glucoses. Once assembled, the oligosaccharide is transferred from the lipid to nascent proteins by oligosaccharyltransferases. The assembly of dolichol-linked oligosaccharides begins on the cytosolic side of the endoplasmic reticulum membrane and finishes in its lumen. RFT1 could mediate the translocation of the cytosolically oriented intermediate DolPP-GlcNAc2Man5, produced by ALG11, into the ER lumen where dolichol-linked oligosaccharides assembly continues. However, the intramembrane lipid transporter activity could not be confirmed in vitro. The sequence is that of Man(5)GlcNAc(2)-PP-dolichol translocation protein RFT1 from Drosophila melanogaster (Fruit fly).